A 441-amino-acid chain; its full sequence is Probable membrane metalloprotease ARASP2, chloroplastic (441 aa).

A chloroplast-targeting transit peptide spans 1-84 (MLLNISSSPI…DFGSLESVLE (84 aa)). His-96 is a Zn(2+) binding site. Residue Glu-97 is part of the active site. His-100 lines the Zn(2+) pocket. A helical membrane pass occupies residues 171-191 (VIVVSAGIVANVIFAYAIIFT). Residues 196–249 (VGLPVQESFPGVLVPDVKSFSAASRDGLLPGDVILAVDGTELSNSGSDSVSKVV) form the PDZ domain. The next 2 membrane-spanning stretches (helical) occupy residues 373–393 (LAVINLLPLPALDGGTLALIL) and 407–427 (VEQGIMSSGIMLVLFLGLFLI).

This sequence belongs to the peptidase M50A family. The cofactor is Zn(2+).

The protein resides in the plastid. It is found in the chloroplast inner membrane. Functionally, metalloprotease essential for chloroplast and plant development. May be involved in regulated intramembrane proteolysis (RIP). The sequence is that of Probable membrane metalloprotease ARASP2, chloroplastic from Arabidopsis thaliana (Mouse-ear cress).